The sequence spans 825 residues: Protein SEY1 homolog 2 (825 aa).

The interval M1–P21 is disordered. Residues M1 to Q728 lie on the Cytoplasmic side of the membrane. Positions G83–P305 constitute a GB1/RHD3-type G domain. Residue G93–S100 coordinates GTP. Positions K373–I397 form a coiled coil. The helical transmembrane segment at I729–L749 threads the bilayer. Residues T750–P752 are Lumenal-facing. Residues L753 to L773 form a helical membrane-spanning segment. At G774–K825 the chain is on the cytoplasmic side.

Belongs to the TRAFAC class dynamin-like GTPase superfamily. GB1/RHD3 GTPase family. RHD3 subfamily.

It localises to the endoplasmic reticulum membrane. Probable GTP-binding protein that may be involved in cell development. In Entamoeba histolytica (strain ATCC 30459 / HM-1:IMSS / ABRM), this protein is Protein SEY1 homolog 2.